Here is a 775-residue protein sequence, read N- to C-terminus: uncharacterized protein (775 aa).

5 helical membrane passes run 16-36, 585-605, 625-645, 655-675, and 742-762; these read KLLI…GVFL, PYIL…VFPL, VMML…LLGI, FYVF…FLAT, and GVLI…FTML.

This sequence to L.lactis phage infection protein (PIP).

The protein resides in the cell membrane. This is an uncharacterized protein from Bacillus subtilis (strain 168).